A 657-amino-acid polypeptide reads, in one-letter code: Translation factor GUF1, mitochondrial (657 aa).

The N-terminal 39 residues, 1–39, are a transit peptide targeting the mitochondrion; the sequence is MRGCLQSVKWLTSALRPSQSLASSTRYPRRLLSTSAPRN. The 181-residue stretch at 59–239 folds into the tr-type G domain; the sequence is ERFRNFCIVA…TVIEQIPAPV (181 aa). Residues 109-116, 173-177, and 227-230 each bind GTP; these read TVKAQTCS, LAFAE, and LLPT.

It belongs to the TRAFAC class translation factor GTPase superfamily. Classic translation factor GTPase family. LepA subfamily.

Its subcellular location is the mitochondrion inner membrane. The catalysed reaction is GTP + H2O = GDP + phosphate + H(+). Promotes mitochondrial protein synthesis. May act as a fidelity factor of the translation reaction, by catalyzing a one-codon backward translocation of tRNAs on improperly translocated ribosomes. Binds to mitochondrial ribosomes in a GTP-dependent manner. This chain is Translation factor GUF1, mitochondrial, found in Ajellomyces capsulatus (strain NAm1 / WU24) (Darling's disease fungus).